The primary structure comprises 173 residues: Small ribosomal subunit protein mS25 (173 aa).

The protein belongs to the mitochondrion-specific ribosomal protein mS25 family. In terms of assembly, component of the mitochondrial small ribosomal subunit (mt-SSU). Mature mammalian 55S mitochondrial ribosomes consist of a small (28S) and a large (39S) subunit. The 28S small subunit contains a 12S ribosomal RNA (12S mt-rRNA) and 30 different proteins. The 39S large subunit contains a 16S rRNA (16S mt-rRNA), a copy of mitochondrial valine transfer RNA (mt-tRNA(Val)), which plays an integral structural role, and 52 different proteins.

Its subcellular location is the mitochondrion. The chain is Small ribosomal subunit protein mS25 (MRPS25) from Homo sapiens (Human).